A 302-amino-acid polypeptide reads, in one-letter code: Acetylglutamate kinase (302 aa).

Residues 55-56 (GG), Arg-77, and Asn-176 each bind substrate.

This sequence belongs to the acetylglutamate kinase family. ArgB subfamily.

It localises to the cytoplasm. It carries out the reaction N-acetyl-L-glutamate + ATP = N-acetyl-L-glutamyl 5-phosphate + ADP. It functions in the pathway amino-acid biosynthesis; L-arginine biosynthesis; N(2)-acetyl-L-ornithine from L-glutamate: step 2/4. Catalyzes the ATP-dependent phosphorylation of N-acetyl-L-glutamate. This chain is Acetylglutamate kinase, found in Corynebacterium efficiens (strain DSM 44549 / YS-314 / AJ 12310 / JCM 11189 / NBRC 100395).